The following is a 344-amino-acid chain: MDFSSCNNHYFYDVDMKEDFYRCIAPSEDIWKKFELVPGFPLSSGGCPGGGGTDWAAEMMDLGWESPVKLTGLSSVVLLRDCMWSGFSTRERLEKVIHERLSTGSPRVTNTQKPVADNETSEPGVDSIEQNATPLVVPTPIPEKVPNSSGSESTSDSEEDEIDVVTVEKRKSYGGRQPVTITVRADPTATKLFHISIHQQQHNYAARLPPEPNTMSPQHNFHSTVKEEPGEVTSPPELQPCSPQMPDSPLASGSSDSEDLAKRKNHNYLERKRRNDLRSRFLALREEVPSLSRSTKTPKVVVLSKATEFLKGLVIQEQQLTAEKLKLWSRHQQLLRRISQLKGR.

2 stretches are compositionally biased toward polar residues: residues 104 to 113 and 213 to 223; these read GSPRVTNTQK and NTMSPQHNFHS. 2 disordered regions span residues 104–162 and 208–271; these read GSPR…EDEI and LPPE…YLER. A compositionally biased stretch (basic and acidic residues) spans 259 to 270; it reads DLAKRKNHNYLE. A bHLH domain is found at 261–313; that stretch reads AKRKNHNYLERKRRNDLRSRFLALREEVPSLSRSTKTPKVVVLSKATEFLKGL. A leucine-zipper region spans residues 313-341; the sequence is LVIQEQQLTAEKLKLWSRHQQLLRRISQL.

Efficient DNA binding requires dimerization with another bHLH protein. Binds DNA as a heterodimer with MAX. As to expression, high levels in oocytes, modest levels in kidney and low levels in spleen.

Its subcellular location is the nucleus. The sequence is that of Protein L-Myc-1-B (mycl1-b) from Xenopus laevis (African clawed frog).